Consider the following 459-residue polypeptide: Proton-coupled folate transporter (459 aa).

Met1 is modified (N-acetylmethionine). Over 1-25 (MEGRANSPGEPRAWPTRSVLCRGCV) the chain is Cytoplasmic. A helical transmembrane segment spans residues 26-44 (EPLVFLANFALVLQGPVTT). Topologically, residues 45–82 (QYLWHRFSADLGYNGTRHRDSCSNHSVDPIAQEVETLT) are extracellular. 2 N-linked (GlcNAc...) asparagine glycosylation sites follow: Asn58 and Asn68. An intrachain disulfide couples Cys66 to Cys298. A helical transmembrane segment spans residues 83 to 108 (SHWTLYMNVGGFLVGLFSSTLLGAWS). At 109–112 (DCVG) the chain is on the cytoplasmic side. The helical transmembrane segment at 113 to 135 (RRPLLVLASLGLLLQTVLSIFVV) threads the bilayer. Topologically, residues 136-140 (QLHLH) are extracellular. A helical membrane pass occupies residues 141–154 (IGYLVLGRILCALL). Over 155-177 (GDFSGLLAASFASVADVSSSRTR) the chain is Cytoplasmic. H(+) is bound by residues Asp156 and Glu185. Residues 178–203 (TIRMALLEACIGVAGMLASFIGGFLL) form a helical membrane-spanning segment. Residues 204–208 (QEQVY) are Extracellular-facing. A helical membrane pass occupies residues 209-227 (VNPFWLALAVLTVMTLYAA). Residues 228–266 (FCFGETVKERTPTRLFTLRHHRSVIQLYVTQAPEKSRKH) are Cytoplasmic-facing. A helical transmembrane segment spans residues 267 to 289 (LALYSLAIFVMITVHLGAQDILT). His281 contributes to the H(+) binding site. Over 290-302 (LYELSAPLCWDSR) the chain is Extracellular. Residues 303-325 (LISYGSAAQQLPYLTSLLGLRLL) traverse the membrane as a helical segment. Over 326-331 (QYCLAD) the chain is Cytoplasmic. The chain crosses the membrane as a helical span at residues 332-351 (TWVAEIGLVFNILGMMVFAF). Over 352–355 (ATIT) the chain is Extracellular. Residues 356 to 376 (PLMFTGYGLLFLSLVVTPIIR) form a helical membrane-spanning segment. At 377 to 388 (AKLSRLVRQSEQ) the chain is on the cytoplasmic side. A helical membrane pass occupies residues 389 to 414 (GALFSALACVNGLAMLMASGIFNSLY). Residues 415–422 (PATLNLMK) lie on the Extracellular side of the membrane. Residues 423–441 (GFPFLLAAGLLFIPAILMG) traverse the membrane as a helical segment. Over 442–459 (ILERDNHCPEFQEFSQSP) the chain is Cytoplasmic. At Ser458 the chain carries Phosphoserine.

It belongs to the major facilitator superfamily. SLC46A family. Monomer. As to expression, expressed in retina and retinal pigment epithelium.

It is found in the cell membrane. It localises to the apical cell membrane. The protein resides in the basolateral cell membrane. Its subcellular location is the endosome membrane. The protein localises to the cytoplasm. It carries out the reaction folate(in) + H(+)(in) = folate(out) + H(+)(out). The enzyme catalyses (6S)-5-methyl-5,6,7,8-tetrahydrofolate(in) + H(+)(in) = (6S)-5-methyl-5,6,7,8-tetrahydrofolate(out) + H(+)(out). The catalysed reaction is methotrexate(in) + H(+)(in) = methotrexate(out) + H(+)(out). It catalyses the reaction pemetrexed(in) + H(+)(in) = pemetrexed(out) + H(+)(out). Its function is as follows. Proton-coupled folate symporter that mediates folate absorption using an H(+) gradient as a driving force. Involved in the intestinal absorption of folates at the brush-border membrane of the proximal jejunum, and the transport from blood to cerebrospinal fluid across the choroid plexus. Functions at acidic pH via alternate outward- and inward-open conformation states. Protonation of residues in the outward open state primes the protein for transport. Binding of folate promotes breaking of salt bridge network and subsequent closure of the extracellular gate, leading to the inward-open state and release of protons and folate. Also able to transport antifolate drugs, such as methotrexate and pemetrexed. Involved in FOLR1-mediated endocytosis by serving as a route of export of folates from acidified endosomes. Also acts as a lower-affinity, pH-independent heme carrier protein and constitutes the main importer of heme in the intestine. Imports heme in the retina and retinal pigment epithelium, in neurons of the hippocampus, in hepatocytes and in the renal epithelial cells. Hence, participates in the trafficking of heme and increases intracellular iron content. This is Proton-coupled folate transporter from Bos taurus (Bovine).